We begin with the raw amino-acid sequence, 344 residues long: Dihydroorotase (344 aa).

Zn(2+) is bound by residues His14 and His16. Substrate-binding positions include 16–18 and Asn42; that span reads HLR. Zn(2+)-binding residues include Lys100, His137, and His175. Lys100 bears the N6-carboxylysine mark. His137 provides a ligand contact to substrate. Leu220 contacts substrate. A Zn(2+)-binding site is contributed by Asp248. Residue Asp248 is part of the active site. His252 and Ala264 together coordinate substrate.

This sequence belongs to the metallo-dependent hydrolases superfamily. DHOase family. Class II DHOase subfamily. Homodimer. Zn(2+) is required as a cofactor.

The catalysed reaction is (S)-dihydroorotate + H2O = N-carbamoyl-L-aspartate + H(+). It participates in pyrimidine metabolism; UMP biosynthesis via de novo pathway; (S)-dihydroorotate from bicarbonate: step 3/3. In terms of biological role, catalyzes the reversible cyclization of carbamoyl aspartate to dihydroorotate. The sequence is that of Dihydroorotase from Ralstonia nicotianae (strain ATCC BAA-1114 / GMI1000) (Ralstonia solanacearum).